We begin with the raw amino-acid sequence, 356 residues long: MRVADFSFELPEALIAHYPQPQRSGCRLLSLDGPTGTLTHGIFTDLLDKLAPGDLLVFNNTRVIPARLFGRKASGGKLEVLVERVLDDHRVLAHVKASKAPKPGAELLLGDDESIRATMLARHDTLFELRFDDERDVFTILNAVGHMPLPPYIDRPDEDADRELYQTVYSQRPGAVAAPTAGLHFDEPMLAALQEKGIEMAFVTLHVGAGTFQPVRVDTIEDHIMHSEYAEVPQEVVDAVLACKARGKRVVAVGTTSVRSLESAAKAAENGLIAPFFGDTRIFIYPGYHYQVVDALVTNFHLPESTLIMLVSAFAGYKNTMNAYQQAVAEQYRFFSYGDAMFISRNPRAPQEKVSP.

This sequence belongs to the QueA family. In terms of assembly, monomer.

Its subcellular location is the cytoplasm. The catalysed reaction is 7-aminomethyl-7-carbaguanosine(34) in tRNA + S-adenosyl-L-methionine = epoxyqueuosine(34) in tRNA + adenine + L-methionine + 2 H(+). It functions in the pathway tRNA modification; tRNA-queuosine biosynthesis. Functionally, transfers and isomerizes the ribose moiety from AdoMet to the 7-aminomethyl group of 7-deazaguanine (preQ1-tRNA) to give epoxyqueuosine (oQ-tRNA). The sequence is that of S-adenosylmethionine:tRNA ribosyltransferase-isomerase from Yersinia pestis.